Consider the following 330-residue polypeptide: Tryptophan--tRNA ligase (330 aa).

Residues 10-12 and 18-19 contribute to the ATP site; these read QAT and GN. The 'HIGH' region signature appears at 11 to 19; sequence ATGSLHLGN. D134 lines the L-tryptophan pocket. ATP-binding positions include 146 to 148, I186, and 195 to 199; these read GED and KMSKS. The short motif at 195 to 199 is the 'KMSKS' region element; sequence KMSKS.

It belongs to the class-I aminoacyl-tRNA synthetase family. In terms of assembly, homodimer.

The protein localises to the cytoplasm. The enzyme catalyses tRNA(Trp) + L-tryptophan + ATP = L-tryptophyl-tRNA(Trp) + AMP + diphosphate + H(+). Its function is as follows. Catalyzes the attachment of tryptophan to tRNA(Trp). This Rickettsia conorii (strain ATCC VR-613 / Malish 7) protein is Tryptophan--tRNA ligase.